Reading from the N-terminus, the 423-residue chain is Pseudouridylate synthase 1 homolog (423 aa).

Positions 32-75 (AGNKVPPALASHQPDRKGRGGWVWEETEHPAKRVKGGEDEEPPR) are disordered. Residues 57 to 68 (ETEHPAKRVKGG) show a composition bias toward basic and acidic residues. Asp-142 functions as the Nucleophile in the catalytic mechanism. Residues 403–423 (ADTGAKVPSSLEGSEGDGDTD) are disordered. A phosphoserine mark is found at Ser-411 and Ser-416. A Phosphothreonine modification is found at Thr-422.

It belongs to the tRNA pseudouridine synthase TruA family. Monomer. Forms a complex with RARG and the SRA1 RNA in the nucleus.

Its subcellular location is the nucleus. The protein resides in the cytoplasm. It localises to the mitochondrion. The catalysed reaction is a uridine in tRNA = a pseudouridine in tRNA. It catalyses the reaction uridine(38/39/40) in tRNA = pseudouridine(38/39/40) in tRNA. It carries out the reaction a uridine in mRNA = a pseudouridine in mRNA. Functionally, pseudouridylate synthase that catalyzes pseudouridylation of tRNAs and mRNAs. Acts on positions 27/28 in the anticodon stem and also positions 34 and 36 in the anticodon of an intron containing tRNA. Also catalyzes pseudouridylation of mRNAs: mediates pseudouridylation of mRNAs with the consensus sequence 5'-UGUAG-3'. Acts as a regulator of pre-mRNA splicing by mediating pseudouridylation of pre-mRNAs at locations associated with alternatively spliced regions. Pseudouridylation of pre-mRNAs near splice sites directly regulates mRNA splicing and mRNA 3'-end processing. Involved in regulation of nuclear receptor activity through pseudouridylation of SRA1 mRNA. Does not form pseudouridine when expressed in vitro. The chain is Pseudouridylate synthase 1 homolog from Mus musculus (Mouse).